The primary structure comprises 112 residues: Cytochrome c6 (112 aa).

Positions 1 to 25 are cleaved as a signal peptide; that stretch reads MKKRFISVCAIAIALLVSLTPAALA. Residues Cys-39, Cys-42, His-43, and Met-83 each coordinate heme c.

Belongs to the cytochrome c family. PetJ subfamily. As to quaternary structure, monomer. Binds 1 heme c group covalently per subunit.

Its subcellular location is the cellular thylakoid lumen. In terms of biological role, functions as an electron carrier between membrane-bound cytochrome b6-f and photosystem I in oxygenic photosynthesis. This Thermosynechococcus vestitus (strain NIES-2133 / IAM M-273 / BP-1) protein is Cytochrome c6 (petJ).